A 316-amino-acid chain; its full sequence is Transaldolase (316 aa).

The Schiff-base intermediate with substrate role is filled by K125.

Belongs to the transaldolase family. Type 1 subfamily. As to quaternary structure, homodimer.

It localises to the cytoplasm. It catalyses the reaction D-sedoheptulose 7-phosphate + D-glyceraldehyde 3-phosphate = D-erythrose 4-phosphate + beta-D-fructose 6-phosphate. The protein operates within carbohydrate degradation; pentose phosphate pathway; D-glyceraldehyde 3-phosphate and beta-D-fructose 6-phosphate from D-ribose 5-phosphate and D-xylulose 5-phosphate (non-oxidative stage): step 2/3. Transaldolase is important for the balance of metabolites in the pentose-phosphate pathway. This Acidovorax sp. (strain JS42) protein is Transaldolase.